The chain runs to 312 residues: Acetyl-coenzyme A carboxylase carboxyl transferase subunit alpha (312 aa).

The CoA carboxyltransferase C-terminal domain maps to 36–286 (RLDKEVKSIY…KEYFLDALRT (251 aa)).

This sequence belongs to the AccA family. As to quaternary structure, acetyl-CoA carboxylase is a heterohexamer composed of biotin carboxyl carrier protein (AccB), biotin carboxylase (AccC) and two subunits each of ACCase subunit alpha (AccA) and ACCase subunit beta (AccD).

It localises to the cytoplasm. The enzyme catalyses N(6)-carboxybiotinyl-L-lysyl-[protein] + acetyl-CoA = N(6)-biotinyl-L-lysyl-[protein] + malonyl-CoA. The protein operates within lipid metabolism; malonyl-CoA biosynthesis; malonyl-CoA from acetyl-CoA: step 1/1. Its function is as follows. Component of the acetyl coenzyme A carboxylase (ACC) complex. First, biotin carboxylase catalyzes the carboxylation of biotin on its carrier protein (BCCP) and then the CO(2) group is transferred by the carboxyltransferase to acetyl-CoA to form malonyl-CoA. The polypeptide is Acetyl-coenzyme A carboxylase carboxyl transferase subunit alpha (Helicobacter pylori (strain G27)).